The sequence spans 882 residues: Translation initiation factor IF-2 (882 aa).

The interval 50 to 299 (SFKSANTTKP…KERPLPETLV (250 aa)) is disordered. 2 stretches are compositionally biased toward basic and acidic residues: residues 60 to 71 (STEKDSKNSSRK) and 84 to 96 (RRRDNKNDHDNRH). The segment covering 97 to 108 (GNNKRRNNKFKK) has biased composition (basic residues). Basic and acidic residues-rich tracts occupy residues 109-133 (QQNDRRAERNKPQTEAKSAARDLLN), 169-183 (KKVENTRKPKEEKLE), 232-242 (QKEETKPTRKK), and 250-263 (EVPDYERERSEHSD). The span at 264–277 (KARRRRNKKNKRIN) shows a compositional bias: basic residues. The span at 278–294 (QSKEIKKQPTQRKERPL) shows a compositional bias: basic and acidic residues. A tr-type G domain is found at 383 to 552 (KRPPVVTIMG…LLQADVMELK (170 aa)). Residues 392-399 (GHVDHGKT) form a G1 region. 392–399 (GHVDHGKT) is a binding site for GTP. A G2 region spans residues 417-421 (GITQK). The interval 438–441 (DTPG) is G3. GTP is bound by residues 438–442 (DTPGH) and 492–495 (NKID). The interval 492-495 (NKID) is G4. Residues 528–530 (SAK) form a G5 region.

Belongs to the TRAFAC class translation factor GTPase superfamily. Classic translation factor GTPase family. IF-2 subfamily.

It localises to the cytoplasm. In terms of biological role, one of the essential components for the initiation of protein synthesis. Protects formylmethionyl-tRNA from spontaneous hydrolysis and promotes its binding to the 30S ribosomal subunits. Also involved in the hydrolysis of GTP during the formation of the 70S ribosomal complex. The polypeptide is Translation initiation factor IF-2 (Lactobacillus gasseri (strain ATCC 33323 / DSM 20243 / BCRC 14619 / CIP 102991 / JCM 1131 / KCTC 3163 / NCIMB 11718 / NCTC 13722 / AM63)).